Here is a 466-residue protein sequence, read N- to C-terminus: Adenosylhomocysteinase (466 aa).

Substrate contacts are provided by Thr57, Asp132, and Glu192. 193 to 195 provides a ligand contact to NAD(+); the sequence is TTT. The substrate site is built by Lys222 and Asp226. NAD(+) contacts are provided by residues Asn227, 256–261, Glu279, Asn314, 335–337, and Asn380; these read GYGDVG and IGH.

Belongs to the adenosylhomocysteinase family. NAD(+) serves as cofactor.

The protein resides in the cytoplasm. The catalysed reaction is S-adenosyl-L-homocysteine + H2O = L-homocysteine + adenosine. It participates in amino-acid biosynthesis; L-homocysteine biosynthesis; L-homocysteine from S-adenosyl-L-homocysteine: step 1/1. May play a key role in the regulation of the intracellular concentration of adenosylhomocysteine. The protein is Adenosylhomocysteinase of Rhizobium meliloti (strain 1021) (Ensifer meliloti).